The sequence spans 610 residues: Elongation factor 4 (610 aa).

The 183-residue stretch at Lys-15–Lys-197 folds into the tr-type G domain. GTP-binding positions include Asp-27–Thr-32 and Asn-144–Asp-147.

The protein belongs to the TRAFAC class translation factor GTPase superfamily. Classic translation factor GTPase family. LepA subfamily.

The protein localises to the cell membrane. The enzyme catalyses GTP + H2O = GDP + phosphate + H(+). Its function is as follows. Required for accurate and efficient protein synthesis under certain stress conditions. May act as a fidelity factor of the translation reaction, by catalyzing a one-codon backward translocation of tRNAs on improperly translocated ribosomes. Back-translocation proceeds from a post-translocation (POST) complex to a pre-translocation (PRE) complex, thus giving elongation factor G a second chance to translocate the tRNAs correctly. Binds to ribosomes in a GTP-dependent manner. The chain is Elongation factor 4 from Buchnera aphidicola subsp. Acyrthosiphon pisum (strain 5A).